The sequence spans 430 residues: Probable GPI-anchored adhesin-like protein PGA32 (430 aa).

A signal peptide spans M1–G16. Disordered regions lie at residues L88 to N195, I232 to K257, G278 to F302, and S314 to D336. 2 stretches are compositionally biased toward low complexity: residues T92–S112 and T122–R135. Residues T141–N167 show a composition bias toward polar residues. Composition is skewed to low complexity over residues S168–S187 and A233–A253. Residues Y289 to F302 are compositionally biased toward polar residues. Over residues S314–T335 the composition is skewed to low complexity. The GPI-anchor amidated glycine moiety is linked to residue G401. The propeptide at D402–T430 is removed in mature form.

The protein resides in the cell membrane. Putative adhesin which is involved in cell adhesion and virulence. The protein is Probable GPI-anchored adhesin-like protein PGA32 (PGA32) of Candida albicans (strain SC5314 / ATCC MYA-2876) (Yeast).